We begin with the raw amino-acid sequence, 341 residues long: HTH-type transcriptional repressor PurR (341 aa).

In terms of domain architecture, HTH lacI-type spans 2-56; that stretch reads ATIKDVAKHAGVSTTTVSHVINKTRFVAENTKAAVWAAIKELHYSPSAVARSLKV. Positions 4-23 form a DNA-binding region, H-T-H motif; the sequence is IKDVAKHAGVSTTTVSHVIN. A DNA-binding region spans residues 48–56; sequence SAVARSLKV. The hypoxanthine site is built by Tyr-73, Arg-190, Thr-192, and Asp-275.

As to quaternary structure, homodimer.

It participates in purine metabolism; purine nucleotide biosynthesis [regulation]. Its function is as follows. Is the main repressor of the genes involved in the de novo synthesis of purine nucleotides, regulating purB, purC, purEK, purF, purHD, purL, purMN and guaBA expression. PurR is allosterically activated to bind its cognate DNA by binding the purine corepressors, hypoxanthine or guanine, thereby effecting transcription repression. The protein is HTH-type transcriptional repressor PurR of Yersinia pestis bv. Antiqua (strain Antiqua).